The chain runs to 31 residues: MTIAIDYFLLVGFCFAFTSGLYLGLKSIKLI.

The chain crosses the membrane as a helical span at residues 3–23 (IAIDYFLLVGFCFAFTSGLYL).

This sequence belongs to the PetL family. As to quaternary structure, the 4 large subunits of the cytochrome b6-f complex are cytochrome b6, subunit IV (17 kDa polypeptide, PetD), cytochrome f and the Rieske protein, while the 4 small subunits are PetG, PetL, PetM and PetN. The complex functions as a dimer.

The protein localises to the plastid. It is found in the chloroplast thylakoid membrane. Its function is as follows. Component of the cytochrome b6-f complex, which mediates electron transfer between photosystem II (PSII) and photosystem I (PSI), cyclic electron flow around PSI, and state transitions. PetL is important for photoautotrophic growth as well as for electron transfer efficiency and stability of the cytochrome b6-f complex. This Trieres chinensis (Marine centric diatom) protein is Cytochrome b6-f complex subunit 6.